A 318-amino-acid polypeptide reads, in one-letter code: Probable tyrosine phosphatase protein N1 (318 aa).

The Tyrosine-protein phosphatase domain maps to 26 to 292; the sequence is IVRLEHHQVI…LILQPGYYVL (267 aa). C233 functions as the Phosphocysteine intermediate in the catalytic mechanism.

Belongs to the protein-tyrosine phosphatase family.

The enzyme catalyses O-phospho-L-tyrosyl-[protein] + H2O = L-tyrosyl-[protein] + phosphate. The protein is Probable tyrosine phosphatase protein N1 (N3) of Microplitis demolitor bracovirus (isolate Webb) (MdBV).